Reading from the N-terminus, the 145-residue chain is Large ribosomal subunit protein uL13 (145 aa).

The protein belongs to the universal ribosomal protein uL13 family. In terms of assembly, part of the 50S ribosomal subunit.

Functionally, this protein is one of the early assembly proteins of the 50S ribosomal subunit, although it is not seen to bind rRNA by itself. It is important during the early stages of 50S assembly. In Bacillus mycoides (strain KBAB4) (Bacillus weihenstephanensis), this protein is Large ribosomal subunit protein uL13.